The primary structure comprises 212 residues: ER lumen protein-retaining receptor 1-B (212 aa).

The Lumenal segment spans residues 1–4 (MNIF). The chain crosses the membrane as a helical span at residues 5-24 (RFLGDISHLSAIIILLLKIW). Residues 25–32 (KSRSCAGI) lie on the Cytoplasmic side of the membrane. The helical transmembrane segment at 33–52 (SGKSQLLFAIVFTTRYLDLF) threads the bilayer. Residues 47 to 48 (RY) are interaction with the K-D-E-L motif on target proteins. Over 53–58 (TNFISF) the chain is Lumenal. Residues 59–79 (YNTSMKVVYVASSYATVWMIY) traverse the membrane as a helical segment. Residues 80–92 (SKFKATYDGNHDT) lie on the Cytoplasmic side of the membrane. A helical transmembrane segment spans residues 93 to 110 (FRVEFLIVPTAILSFLVN). At 111-116 (HDFTPL) the chain is on the lumenal side. A helical transmembrane segment spans residues 117 to 135 (EILWTFSIYLESVAILPQL). The Cytoplasmic portion of the chain corresponds to 136–149 (FMVSKTGEAETITS). A helical transmembrane segment spans residues 150 to 168 (HYLFALGIYRTLYLFNWIW). The tract at residues 159-169 (RTLYLFNWIWR) is interaction with the K-D-E-L motif on target proteins. Over 169-178 (RYQFEEFFDL) the chain is Lumenal. Residues 179–199 (IAIVAGLVQTVLYCDFFYLYI) traverse the membrane as a helical segment. Residues 200–212 (TKVLKGKKLSLPA) are Cytoplasmic-facing. The tract at residues 204 to 207 (KGKK) is important for recycling of cargo proteins with the sequence motif K-D-E-L from the Golgi to the endoplasmic reticulum.

Belongs to the ERD2 family.

The protein resides in the golgi apparatus membrane. It localises to the cytoplasmic vesicle. It is found in the COPI-coated vesicle membrane. The protein localises to the endoplasmic reticulum membrane. Its subcellular location is the endoplasmic reticulum-Golgi intermediate compartment membrane. Receptor for the C-terminal sequence motif K-D-E-L that is present on endoplasmic reticulum resident proteins and that mediates their recycling from the Golgi back to the endoplasmic reticulum. This chain is ER lumen protein-retaining receptor 1-B (kdelr1-b), found in Xenopus laevis (African clawed frog).